Consider the following 240-residue polypeptide: Tetrahydromethanopterin S-methyltransferase subunit A (240 aa).

The Cytoplasmic portion of the chain corresponds to 1 to 218 (MADKREPAPG…KFHSGVHAGK (218 aa)). H85 contacts 5-hydroxybenzimidazolylcob(I)amide. A helical transmembrane segment spans residues 219-239 (VEGAMIGLTITISLLGLLLLG). Residue R240 is a topological domain, extracellular.

Belongs to the MtrA family. The complex is composed of 8 subunits; MtrA, MtrB, MtrC, MtrD, MtrE, MtrF, MtrG and MtrH. The cofactor is 5-hydroxybenzimidazolylcob(I)amide.

Its subcellular location is the cell membrane. It carries out the reaction 5-methyl-5,6,7,8-tetrahydromethanopterin + coenzyme M + 2 Na(+)(in) = 5,6,7,8-tetrahydromethanopterin + methyl-coenzyme M + 2 Na(+)(out). Its pathway is one-carbon metabolism; methanogenesis from CO(2); methyl-coenzyme M from 5,10-methylene-5,6,7,8-tetrahydromethanopterin: step 2/2. In terms of biological role, part of a complex that catalyzes the formation of methyl-coenzyme M and tetrahydromethanopterin from coenzyme M and methyl-tetrahydromethanopterin. This is an energy-conserving, sodium-ion translocating step. The protein is Tetrahydromethanopterin S-methyltransferase subunit A of Methanosarcina mazei (strain ATCC BAA-159 / DSM 3647 / Goe1 / Go1 / JCM 11833 / OCM 88) (Methanosarcina frisia).